The chain runs to 386 residues: Protein-glutamate methylesterase/protein-glutamine glutaminase (386 aa).

Positions 4–121 constitute a Response regulatory domain; sequence KVLVVDDSAF…ARNRDEAVKT (118 aa). Asp55 carries the 4-aspartylphosphate modification. The tract at residues 133-161 is disordered; sequence PVSRTSARASTPPPVAKQPERSSEPTTAL. Residues 190-384 form the CheB-type methylesterase domain; the sequence is INRAYQLLAI…KAIMKEVGYS (195 aa). Catalysis depends on residues Ser202, His229, and Asp326.

It belongs to the CheB family. In terms of processing, phosphorylated by CheA. Phosphorylation of the N-terminal regulatory domain activates the methylesterase activity.

Its subcellular location is the cytoplasm. It carries out the reaction [protein]-L-glutamate 5-O-methyl ester + H2O = L-glutamyl-[protein] + methanol + H(+). The catalysed reaction is L-glutaminyl-[protein] + H2O = L-glutamyl-[protein] + NH4(+). Its function is as follows. Involved in chemotaxis. Part of a chemotaxis signal transduction system that modulates chemotaxis in response to various stimuli. Catalyzes the demethylation of specific methylglutamate residues introduced into the chemoreceptors (methyl-accepting chemotaxis proteins or MCP) by CheR. Also mediates the irreversible deamidation of specific glutamine residues to glutamic acid. The sequence is that of Protein-glutamate methylesterase/protein-glutamine glutaminase from Idiomarina loihiensis (strain ATCC BAA-735 / DSM 15497 / L2-TR).